Reading from the N-terminus, the 505-residue chain is Ribose import ATP-binding protein RbsA 1 (505 aa).

ABC transporter domains are found at residues 13-249 and 254-503; these read LALR…VGRD and YPKQ…TGRA. 45-52 serves as a coordination point for ATP; that stretch reads GENGAGKS.

Belongs to the ABC transporter superfamily. Ribose importer (TC 3.A.1.2.1) family. As to quaternary structure, the complex is composed of an ATP-binding protein (RbsA), two transmembrane proteins (RbsC) and a solute-binding protein (RbsB).

It is found in the cell membrane. It carries out the reaction D-ribose(out) + ATP + H2O = D-ribose(in) + ADP + phosphate + H(+). Its function is as follows. Part of the ABC transporter complex RbsABC involved in ribose import. Responsible for energy coupling to the transport system. This is Ribose import ATP-binding protein RbsA 1 from Streptomyces coelicolor (strain ATCC BAA-471 / A3(2) / M145).